Reading from the N-terminus, the 91-residue chain is Putative regulatory protein Moth_0891 (91 aa).

Belongs to the RemA family.

In Moorella thermoacetica (strain ATCC 39073 / JCM 9320), this protein is Putative regulatory protein Moth_0891.